A 716-amino-acid polypeptide reads, in one-letter code: DNA ligase (716 aa).

Residues Asp49–Asp53, Ser98–Leu99, and Glu131 each bind NAD(+). The N6-AMP-lysine intermediate role is filled by Lys133. Residues Arg154, Glu191, Lys308, and Lys332 each coordinate NAD(+). Zn(2+)-binding residues include Cys437, Cys439, Cys461, and Cys467. The BRCT domain maps to Lys638–Glu716.

Belongs to the NAD-dependent DNA ligase family. LigA subfamily. Requires Mg(2+) as cofactor. Mn(2+) is required as a cofactor.

It catalyses the reaction NAD(+) + (deoxyribonucleotide)n-3'-hydroxyl + 5'-phospho-(deoxyribonucleotide)m = (deoxyribonucleotide)n+m + AMP + beta-nicotinamide D-nucleotide.. Functionally, DNA ligase that catalyzes the formation of phosphodiester linkages between 5'-phosphoryl and 3'-hydroxyl groups in double-stranded DNA using NAD as a coenzyme and as the energy source for the reaction. It is essential for DNA replication and repair of damaged DNA. This chain is DNA ligase, found in Bradyrhizobium sp. (strain BTAi1 / ATCC BAA-1182).